The sequence spans 336 residues: Fructose-1,6-bisphosphatase class 1 (336 aa).

Positions 92, 115, 117, and 118 each coordinate Mg(2+). Residues 118 to 121 (DGSS), asparagine 211, tyrosine 244, 262 to 264 (YLY), and lysine 274 contribute to the substrate site. Mg(2+) is bound at residue glutamate 280.

It belongs to the FBPase class 1 family. As to quaternary structure, homotetramer. Mg(2+) is required as a cofactor.

Its subcellular location is the cytoplasm. It catalyses the reaction beta-D-fructose 1,6-bisphosphate + H2O = beta-D-fructose 6-phosphate + phosphate. It functions in the pathway carbohydrate biosynthesis; gluconeogenesis. This chain is Fructose-1,6-bisphosphatase class 1, found in Vibrio cholerae serotype O1 (strain ATCC 39315 / El Tor Inaba N16961).